A 332-amino-acid polypeptide reads, in one-letter code: uncharacterized protein (332 aa).

Positions 159–256 (PLEISGRGGN…PRPHPWGPGP (98 aa)) are disordered. Over residues 201–231 (RPPSPRPPSPRPPHPRPPSPRPPHPRPPSPR) the composition is skewed to pro residues.

It is found in the virion. This is an uncharacterized protein from Acanthamoeba polyphaga (Amoeba).